Reading from the N-terminus, the 449-residue chain is Cysteine--tRNA ligase (449 aa).

Cys-30 provides a ligand contact to Zn(2+). A 'HIGH' region motif is present at residues 32 to 42 (PTVYDRAHLGN). Residues Cys-210, His-235, and Glu-239 each contribute to the Zn(2+) site. The 'KMSKS' region signature appears at 268–272 (KMSKS). Lys-271 contributes to the ATP binding site.

This sequence belongs to the class-I aminoacyl-tRNA synthetase family. As to quaternary structure, monomer. Zn(2+) serves as cofactor.

The protein localises to the cytoplasm. It carries out the reaction tRNA(Cys) + L-cysteine + ATP = L-cysteinyl-tRNA(Cys) + AMP + diphosphate. The polypeptide is Cysteine--tRNA ligase (Acidiphilium cryptum (strain JF-5)).